A 104-amino-acid chain; its full sequence is Salivary protein FS145 (104 aa).

The first 18 residues, 1–18 (MKLFAVFLLFCLVNQIYC), serve as a signal peptide directing secretion. 4 cysteine pairs are disulfide-bonded: C32–C80, C62–C89, C72–C100, and C76–C102. Positions 92 to 94 (WGD) match the Putative integrin attachment site; atypical (WGD) motif.

As to quaternary structure, interacts with host integrin alpha-V/beta-3 (ITGAV:ITGB3).

It localises to the secreted. In terms of biological role, inhibits proliferation, adhesion and migration of host cells as well as host angiogenesis by blocking host integrin alpha-V/beta-3 (ITGAV:ITGB3). This chain is Salivary protein FS145, found in Xenopsylla cheopis (Oriental rat flea).